The sequence spans 113 residues: T cell receptor alpha variable 8-3 (113 aa).

The N-terminal stretch at 1-20 is a signal peptide; it reads MLLELIPLLGIHFVLRTARA. The region spanning 21–113 is the Ig-like domain; sequence QSVTQPDIHI…DAAEYFCAVG (93 aa). The cysteines at positions 42 and 110 are disulfide-linked. An N-linked (GlcNAc...) asparagine glycan is attached at N43.

In terms of assembly, alpha-beta TR is a heterodimer composed of an alpha and beta chain; disulfide-linked. The alpha-beta TR is associated with the transmembrane signaling CD3 coreceptor proteins to form the TR-CD3 (TcR or TCR). The assembly of alpha-beta TR heterodimers with CD3 occurs in the endoplasmic reticulum where a single alpha-beta TR heterodimer associates with one CD3D-CD3E heterodimer, one CD3G-CD3E heterodimer and one CD247 homodimer forming a stable octameric structure. CD3D-CD3E and CD3G-CD3E heterodimers preferentially associate with TR alpha and TR beta chains, respectively. The association of the CD247 homodimer is the last step of TcR assembly in the endoplasmic reticulum and is required for transport to the cell surface.

It localises to the cell membrane. Its function is as follows. V region of the variable domain of T cell receptor (TR) alpha chain that participates in the antigen recognition. Alpha-beta T cell receptors are antigen specific receptors which are essential to the immune response and are present on the cell surface of T lymphocytes. Recognize peptide-major histocompatibility (MH) (pMH) complexes that are displayed by antigen presenting cells (APC), a prerequisite for efficient T cell adaptive immunity against pathogens. Binding of alpha-beta TR to pMH complex initiates TR-CD3 clustering on the cell surface and intracellular activation of LCK that phosphorylates the ITAM motifs of CD3G, CD3D, CD3E and CD247 enabling the recruitment of ZAP70. In turn ZAP70 phosphorylates LAT, which recruits numerous signaling molecules to form the LAT signalosome. The LAT signalosome propagates signal branching to three major signaling pathways, the calcium, the mitogen-activated protein kinase (MAPK) kinase and the nuclear factor NF-kappa-B (NF-kB) pathways, leading to the mobilization of transcription factors that are critical for gene expression and essential for T cell growth and differentiation. The T cell repertoire is generated in the thymus, by V-(D)-J rearrangement. This repertoire is then shaped by intrathymic selection events to generate a peripheral T cell pool of self-MH restricted, non-autoaggressive T cells. Post-thymic interaction of alpha-beta TR with the pMH complexes shapes TR structural and functional avidity. The chain is T cell receptor alpha variable 8-3 from Homo sapiens (Human).